We begin with the raw amino-acid sequence, 659 residues long: DNA mismatch repair protein MutL (659 aa).

The protein belongs to the DNA mismatch repair MutL/HexB family.

In terms of biological role, this protein is involved in the repair of mismatches in DNA. It is required for dam-dependent methyl-directed DNA mismatch repair. May act as a 'molecular matchmaker', a protein that promotes the formation of a stable complex between two or more DNA-binding proteins in an ATP-dependent manner without itself being part of a final effector complex. In Ligilactobacillus salivarius (strain UCC118) (Lactobacillus salivarius), this protein is DNA mismatch repair protein MutL.